The following is a 355-amino-acid chain: Peptide chain release factor 1 (355 aa).

Gln-233 is subject to N5-methylglutamine. The span at 280-293 (ERRKKEQERADSRR) shows a compositional bias: basic and acidic residues. A disordered region spans residues 280–308 (ERRKKEQERADSRRGQVGSGDRSERIRTY).

The protein belongs to the prokaryotic/mitochondrial release factor family. Post-translationally, methylated by PrmC. Methylation increases the termination efficiency of RF1.

Its subcellular location is the cytoplasm. Its function is as follows. Peptide chain release factor 1 directs the termination of translation in response to the peptide chain termination codons UAG and UAA. In Rickettsia peacockii (strain Rustic), this protein is Peptide chain release factor 1.